A 491-amino-acid chain; its full sequence is Probable succinate-semialdehyde dehydrogenase [NADP(+)] (491 aa).

NADP(+)-binding positions include 163-164 (WN), 187-190 (KPAE), and 241-242 (GS). Catalysis depends on Glu263, which acts as the Proton acceptor. An NADP(+)-binding site is contributed by Leu264. Residue Cys297 is the Nucleophile of the active site. Glu394 contributes to the NADP(+) binding site.

This sequence belongs to the aldehyde dehydrogenase family.

The enzyme catalyses succinate semialdehyde + NADP(+) + H2O = succinate + NADPH + 2 H(+). It functions in the pathway amino-acid degradation; 4-aminobutanoate degradation. In terms of biological role, catalyzes the NADP(+) dependent oxidation of succinate semialdehyde to succinate. This chain is Probable succinate-semialdehyde dehydrogenase [NADP(+)] (gabD), found in Sinorhizobium fredii (strain NBRC 101917 / NGR234).